Reading from the N-terminus, the 273-residue chain is Dermonecrotic toxin LruSicTox-alphaIC1a (273 aa).

The active site involves His-5. The Mg(2+) site is built by Glu-25 and Asp-27. His-41 functions as the Nucleophile in the catalytic mechanism. Intrachain disulfides connect Cys-45–Cys-51 and Cys-47–Cys-190. Asp-85 lines the Mg(2+) pocket.

Belongs to the arthropod phospholipase D family. Class II subfamily. It depends on Mg(2+) as a cofactor. Expressed by the venom gland.

It localises to the secreted. It carries out the reaction an N-(acyl)-sphingosylphosphocholine = an N-(acyl)-sphingosyl-1,3-cyclic phosphate + choline. The catalysed reaction is an N-(acyl)-sphingosylphosphoethanolamine = an N-(acyl)-sphingosyl-1,3-cyclic phosphate + ethanolamine. The enzyme catalyses a 1-acyl-sn-glycero-3-phosphocholine = a 1-acyl-sn-glycero-2,3-cyclic phosphate + choline. It catalyses the reaction a 1-acyl-sn-glycero-3-phosphoethanolamine = a 1-acyl-sn-glycero-2,3-cyclic phosphate + ethanolamine. Dermonecrotic toxins cleave the phosphodiester linkage between the phosphate and headgroup of certain phospholipids (sphingolipid and lysolipid substrates), forming an alcohol (often choline) and a cyclic phosphate. This toxin acts on sphingomyelin (SM). It may also act on ceramide phosphoethanolamine (CPE), lysophosphatidylcholine (LPC) and lysophosphatidylethanolamine (LPE), but not on lysophosphatidylserine (LPS), and lysophosphatidylglycerol (LPG). It acts by transphosphatidylation, releasing exclusively cyclic phosphate products as second products. Induces dermonecrosis, hemolysis, increased vascular permeability, edema, inflammatory response, and platelet aggregation. The polypeptide is Dermonecrotic toxin LruSicTox-alphaIC1a (Loxosceles rufescens (Mediterranean recluse spider)).